We begin with the raw amino-acid sequence, 30 residues long: KIPCGESCVWIPCVTSIFNCKCENKVCYHD.

The cyclopeptide (Lys-Asp) cross-link spans 1–30 (KIPCGESCVWIPCVTSIFNCKCENKVCYHD). 3 disulfide bridges follow: C4-C20, C8-C22, and C13-C27.

In terms of processing, this is a cyclic peptide.

Probably participates in a plant defense mechanism. Inhibits the cytopathic effects of the human immunodeficiency virus. The protein is Circulin-D of Chassalia parviflora.